A 166-amino-acid polypeptide reads, in one-letter code: NAD(P)H-quinone oxidoreductase subunit I, chloroplastic (166 aa).

4Fe-4S ferredoxin-type domains follow at residues 55 to 84 and 95 to 124; these read GRIH…VDWK and LNYS…MTEE. [4Fe-4S] cluster-binding residues include cysteine 64, cysteine 67, cysteine 70, cysteine 74, cysteine 104, cysteine 107, cysteine 110, and cysteine 114.

Belongs to the complex I 23 kDa subunit family. As to quaternary structure, NDH is composed of at least 16 different subunits, 5 of which are encoded in the nucleus. [4Fe-4S] cluster is required as a cofactor.

The protein resides in the plastid. It is found in the chloroplast thylakoid membrane. It carries out the reaction a plastoquinone + NADH + (n+1) H(+)(in) = a plastoquinol + NAD(+) + n H(+)(out). It catalyses the reaction a plastoquinone + NADPH + (n+1) H(+)(in) = a plastoquinol + NADP(+) + n H(+)(out). Functionally, NDH shuttles electrons from NAD(P)H:plastoquinone, via FMN and iron-sulfur (Fe-S) centers, to quinones in the photosynthetic chain and possibly in a chloroplast respiratory chain. The immediate electron acceptor for the enzyme in this species is believed to be plastoquinone. Couples the redox reaction to proton translocation, and thus conserves the redox energy in a proton gradient. The protein is NAD(P)H-quinone oxidoreductase subunit I, chloroplastic of Perymeniopsis ovalifolia.